Here is a 172-residue protein sequence, read N- to C-terminus: FMN reductase (NADH) RutF 2 (172 aa).

This sequence belongs to the non-flavoprotein flavin reductase family. RutF subfamily.

It carries out the reaction FMNH2 + NAD(+) = FMN + NADH + 2 H(+). Its function is as follows. Catalyzes the reduction of FMN to FMNH2 which is used to reduce pyrimidine by RutA via the Rut pathway. This is FMN reductase (NADH) RutF 2 from Methylorubrum extorquens (strain PA1) (Methylobacterium extorquens).